Consider the following 331-residue polypeptide: MIKDVYELLLSRKNEIEKQISLLDETSNNLLKEKIKEKWKEYCQTQGKLSTVLAIDGGMWIKELRSGIVYIVNAEIVKAEGFNVTPIDSKALIGVLRPGNMAKERVSLLMQLLELKLGLKHGDKAEYILFDGSIVKKIGKHKFSTKISLLDDIDVMDDKIYSLEENDEELMHKYLVAENQLVMSALISKYKGKLVWISKNSKSTELFQENISDVSLLELFTKNCGYTIGIEKKISSENIISPKASTILSNASFYSFYTRLKEGEKILKIEMFNNEIENIISILSPISIKGYPYPLLKVHTDVKVSRQDRERIKQLLNIKKKDIEWWPSQLF.

Aspartate 56 and aspartate 131 together coordinate Mn(2+).

Belongs to the NurA family. As to quaternary structure, homodimer. Interacts with SSB. It depends on Mn(2+) as a cofactor.

Its activity is regulated as follows. The 5'-3' ssDNA and dsDNA exonuclease and ssDNA endonuclease activities are inhibited by SSB (single-stranded DNA-binding protein). Involved in DNA double-strand break (DSB) repair. Probably acts with HerA to stimulate resection of the 5' strand and produce the long 3' single-strand that is required for RadA loading. Exhibits both single-stranded endonuclease activity and 5'-3' exonuclease activity on single-stranded and double-stranded DNA. In Sulfurisphaera tokodaii (strain DSM 16993 / JCM 10545 / NBRC 100140 / 7) (Sulfolobus tokodaii), this protein is DNA double-strand break repair nuclease NurA.